Here is a 355-residue protein sequence, read N- to C-terminus: tRNA (guanine-N(1)-)-methyltransferase (355 aa).

Residues G109 and 129–134 (IGDYVL) contribute to the S-adenosyl-L-methionine site.

It belongs to the RNA methyltransferase TrmD family. In terms of assembly, homodimer.

The protein localises to the cytoplasm. It catalyses the reaction guanosine(37) in tRNA + S-adenosyl-L-methionine = N(1)-methylguanosine(37) in tRNA + S-adenosyl-L-homocysteine + H(+). Functionally, specifically methylates guanosine-37 in various tRNAs. The polypeptide is tRNA (guanine-N(1)-)-methyltransferase (Chlamydia caviae (strain ATCC VR-813 / DSM 19441 / 03DC25 / GPIC) (Chlamydophila caviae)).